Here is a 398-residue protein sequence, read N- to C-terminus: Elongation factor Tu (398 aa).

Residues 10-207 (KPHVNIGTIG…TADEYIPEPE (198 aa)) form the tr-type G domain. Residues 19 to 26 (GHVDHGKT) are G1. GTP is bound at residue 19 to 26 (GHVDHGKT). Mg(2+) is bound at residue Thr-26. The segment at 63–67 (GITIN) is G2. Residues 84–87 (DAPG) form a G3 region. Residues 84-88 (DAPGH) and 139-142 (NKID) each bind GTP. The G4 stretch occupies residues 139-142 (NKID). Residues 177–179 (SAL) are G5.

This sequence belongs to the TRAFAC class translation factor GTPase superfamily. Classic translation factor GTPase family. EF-Tu/EF-1A subfamily. As to quaternary structure, monomer.

The protein localises to the cytoplasm. It catalyses the reaction GTP + H2O = GDP + phosphate + H(+). GTP hydrolase that promotes the GTP-dependent binding of aminoacyl-tRNA to the A-site of ribosomes during protein biosynthesis. This Streptococcus uberis (strain ATCC BAA-854 / 0140J) protein is Elongation factor Tu.